Consider the following 173-residue polypeptide: MPRTQRNDNFIDKSFTVMADIILKILPTNNRSKEAFAYYRDGMSAQADGEYSEALENYEEALRLEDDPNDRSYILYNMGLIYASNGDHHKALELYHEAIDLNPRMPQALNNIAVVYHYQGEKAKQSGNEDESEALFDKAAEYWKQAIRIAPNNYIEAQNWLKTTGRSEMDVFF.

TPR repeat units lie at residues 35–68 (AFAY…EDDP), 72–105 (SYIL…NPRM), and 120–153 (GEKA…APNN).

It belongs to the Ycf3 family.

It localises to the cellular thylakoid membrane. Essential for the assembly of the photosystem I (PSI) complex. May act as a chaperone-like factor to guide the assembly of the PSI subunits. The sequence is that of Photosystem I assembly protein Ycf3 from Picosynechococcus sp. (strain ATCC 27264 / PCC 7002 / PR-6) (Agmenellum quadruplicatum).